The primary structure comprises 293 residues: MGGDKIKKDKRQKREDYRAAMRKDDISELPRKKFYRQRAHANPFSDHQLIYPPHPDQMDWSSLYPHYIVDEPTTTSPPPPPPVPEQTPSEPDLTPLRPKPLSKEVSVADIGCGFGGLLIALAPTMPEALILGLEIRVSVTHFVEDRIKALRAQNQAAGLYRNVGVLRANTMKFLPNFFRKAQLEKVFICFPDPHFKIRKHKQRIVSTTLNSEYAYVVKPGGIVYTITDVLDLHEWMVQHFDAHPSFERVSEEEQEADPCVAIMRTETEEGKKVERHKGEKHVALFRRLEDPAW.

The span at 1–31 (MGGDKIKKDKRQKREDYRAAMRKDDISELPR) shows a compositional bias: basic and acidic residues. Disordered regions lie at residues 1–33 (MGGDKIKKDKRQKREDYRAAMRKDDISELPRKK) and 68–97 (IVDEPTTTSPPPPPPVPEQTPSEPDLTPLR). Positions 75–85 (TSPPPPPPVPE) are enriched in pro residues. S-adenosyl-L-methionine contacts are provided by residues G111, 134–135 (EI), 169–170 (NT), and C189. The active site involves D192. S-adenosyl-L-methionine is bound at residue 267–269 (TEE).

Belongs to the class I-like SAM-binding methyltransferase superfamily. TrmB family. In terms of assembly, forms a complex with TRM82.

It localises to the nucleus. The catalysed reaction is guanosine(46) in tRNA + S-adenosyl-L-methionine = N(7)-methylguanosine(46) in tRNA + S-adenosyl-L-homocysteine. It participates in tRNA modification; N(7)-methylguanine-tRNA biosynthesis. Catalyzes the formation of N(7)-methylguanine at position 46 (m7G46) in tRNA. The chain is tRNA (guanine-N(7)-)-methyltransferase from Chaetomium globosum (strain ATCC 6205 / CBS 148.51 / DSM 1962 / NBRC 6347 / NRRL 1970) (Soil fungus).